A 245-amino-acid chain; its full sequence is Probable proteasome subunit alpha type-2 (245 aa).

The protein belongs to the peptidase T1A family. The 26S proteasome consists of a 20S proteasome core and two 19S regulatory subunits. The 20S proteasome core is composed of 28 subunits that are arranged in four stacked rings, resulting in a barrel-shaped structure. The two end rings are each formed by seven alpha subunits, and the two central rings are each formed by seven beta subunits. The catalytic chamber with the active sites is on the inside of the barrel.

Its subcellular location is the cytoplasm. The protein localises to the nucleus. Its function is as follows. The proteasome is a multicatalytic proteinase complex which is characterized by its ability to cleave peptides with Arg, Phe, Tyr, Leu, and Glu adjacent to the leaving group at neutral or slightly basic pH. The proteasome has an ATP-dependent proteolytic activity. The sequence is that of Probable proteasome subunit alpha type-2 (pre8) from Schizosaccharomyces pombe (strain 972 / ATCC 24843) (Fission yeast).